We begin with the raw amino-acid sequence, 461 residues long: MATATTQRPLKGPAKRMSTWTMTREAITIGFDAGDGFLGRLRGSDITRFRCAGRRFVSISHPDYVDHVLHEARLKYVKSDEYGPIRATAGLNLLTDEGDSWARHRGALNSTFARRHLRGLVGLMIDPIADVTAARVPGAQFDMHQSMVETTLRVVANALFSQDFGPLVQSMHDLATRGLRRAEKLERLGLWGLMPRTVYDTLIWCIYSGVHLPPPLREMQEITLTLDRAINSVIDRRLAEPTNSADLLNVLLSADGGIWPRQRVRDEALTFMLAGHETTANAMSWFWYLMALNPQARDHMLTELDDVLGMRRPTADDLGKLAWTTACLQESQRYFSSVWIIAREAVDDDIIDGHRIRRGTTVVIPIHHIHHDPRWWPDPDRFDPGRFLRCPTDRPRCAYLPFGGGRRICIGQSFALMEMVLMAAIMSQHFTFDLAPGYHVELEATLTLRPKHGVHVIGRRR.

Residue C409 participates in heme binding.

This sequence belongs to the cytochrome P450 family. Heme is required as a cofactor.

In Mycobacterium tuberculosis (strain ATCC 25618 / H37Rv), this protein is Putative cytochrome P450 132 (cyp132).